Consider the following 271-residue polypeptide: 3-methyl-2-oxobutanoate hydroxymethyltransferase (271 aa).

The Mg(2+) site is built by D51 and D90. 3-methyl-2-oxobutanoate is bound by residues 51 to 52 (DS), D90, and K118. Residue E120 coordinates Mg(2+). E186 functions as the Proton acceptor in the catalytic mechanism.

Belongs to the PanB family. In terms of assembly, homodecamer; pentamer of dimers. Mg(2+) serves as cofactor.

It localises to the cytoplasm. It carries out the reaction 3-methyl-2-oxobutanoate + (6R)-5,10-methylene-5,6,7,8-tetrahydrofolate + H2O = 2-dehydropantoate + (6S)-5,6,7,8-tetrahydrofolate. It functions in the pathway cofactor biosynthesis; (R)-pantothenate biosynthesis; (R)-pantoate from 3-methyl-2-oxobutanoate: step 1/2. Its function is as follows. Catalyzes the reversible reaction in which hydroxymethyl group from 5,10-methylenetetrahydrofolate is transferred onto alpha-ketoisovalerate to form ketopantoate. The polypeptide is 3-methyl-2-oxobutanoate hydroxymethyltransferase (Xanthomonas euvesicatoria pv. vesicatoria (strain 85-10) (Xanthomonas campestris pv. vesicatoria)).